The chain runs to 370 residues: 4-hydroxy-3-methylbut-2-en-1-yl diphosphate synthase (flavodoxin) (370 aa).

Positions 270, 273, 305, and 312 each coordinate [4Fe-4S] cluster.

It belongs to the IspG family. Requires [4Fe-4S] cluster as cofactor.

It carries out the reaction (2E)-4-hydroxy-3-methylbut-2-enyl diphosphate + oxidized [flavodoxin] + H2O + 2 H(+) = 2-C-methyl-D-erythritol 2,4-cyclic diphosphate + reduced [flavodoxin]. It participates in isoprenoid biosynthesis; isopentenyl diphosphate biosynthesis via DXP pathway; isopentenyl diphosphate from 1-deoxy-D-xylulose 5-phosphate: step 5/6. Converts 2C-methyl-D-erythritol 2,4-cyclodiphosphate (ME-2,4cPP) into 1-hydroxy-2-methyl-2-(E)-butenyl 4-diphosphate. In Hahella chejuensis (strain KCTC 2396), this protein is 4-hydroxy-3-methylbut-2-en-1-yl diphosphate synthase (flavodoxin).